The primary structure comprises 403 residues: D-mannonate dehydratase (403 aa).

Positions 38 and 123 each coordinate substrate. Residue Tyr160 is the Proton donor/acceptor of the active site. Asp211 lines the Mg(2+) pocket. His213 (proton donor/acceptor) is an active-site residue. Glu237 and Glu263 together coordinate Mg(2+). Substrate is bound by residues Glu263, Arg284, His313, Asp317, and Glu340.

It belongs to the mandelate racemase/muconate lactonizing enzyme family. GalD subfamily. Mg(2+) serves as cofactor.

It carries out the reaction D-mannonate = 2-dehydro-3-deoxy-D-gluconate + H2O. It functions in the pathway carbohydrate metabolism; pentose and glucuronate interconversion. In terms of biological role, catalyzes the dehydration of D-mannonate. Has no detectable activity with a panel of 70 other acid sugars (in vitro). In Sphingomonas sp. (strain SKA58), this protein is D-mannonate dehydratase.